Reading from the N-terminus, the 221-residue chain is Early nodulin-like protein 4 (221 aa).

The first 21 residues, 1 to 21 (MVFVKMTDVYLMIVMLMGLGF), serve as a signal peptide directing secretion. Residues 29 to 130 (HKFYVGGRDG…GQKLAVTVMS (102 aa)) enclose the Phytocyanin domain. N59 and N85 each carry an N-linked (GlcNAc...) asparagine glycan. The cysteines at positions 84 and 118 are disulfide-linked. Positions 130 to 185 (STGHHSHTPRHPSPSPSPSASPVRKALLSPAPIPVHKALSSPAPTPGVDPSHSEVL) are disordered. Residue N197 is the site of GPI-anchor amidated asparagine attachment. A propeptide spans 198–221 (LAGSVAPGVISLGLVLVIMISSMV) (removed in mature form).

Belongs to the early nodulin-like (ENODL) family. Confined to flowers.

Its subcellular location is the cell membrane. In terms of biological role, may act as a carbohydrate transporter. The sequence is that of Early nodulin-like protein 4 from Arabidopsis thaliana (Mouse-ear cress).